We begin with the raw amino-acid sequence, 473 residues long: Argininosuccinate lyase (473 aa).

This sequence belongs to the lyase 1 family. Argininosuccinate lyase subfamily.

It is found in the cytoplasm. It carries out the reaction 2-(N(omega)-L-arginino)succinate = fumarate + L-arginine. It participates in amino-acid biosynthesis; L-arginine biosynthesis; L-arginine from L-ornithine and carbamoyl phosphate: step 3/3. In Bordetella pertussis (strain Tohama I / ATCC BAA-589 / NCTC 13251), this protein is Argininosuccinate lyase.